An 883-amino-acid chain; its full sequence is Chromatin structure-remodeling complex protein RSC30 (883 aa).

The segment at residues 14-45 is a DNA-binding region (zn(2)-C6 fungal-type); it reads ACTQCRKRKIGCDRAKPICGNCVKYNKPDCFY. 2 disordered regions span residues 121-157 and 241-273; these read QNNN…DVPS and NTTA…TSRT. Residues 130–149 show a composition bias toward polar residues; that stretch reads APRQNSSTVSSNVHGNTIVR. A Phosphoserine modification is found at serine 150. A compositionally biased stretch (polar residues) spans 241–251; that stretch reads NTTANKINKTG. Basic and acidic residues predominate over residues 252 to 270; sequence ENSKKGKVDGKRAGFDHQT.

Forms a heteromer with RSC3. Interacts with NPL6. Component of the two forms of the RSC complex composed of at least either RSC1 or RSC2, and ARP7, ARP9, LDB7, NPL6, RSC3, RSC30, RSC4, RSC58, RSC6, RSC8, RSC9, SFH1, STH1, HTL1 and probably RTT102. The complexes interact with histone and histone variant components of centromeric chromatin. Component of a fungal-specific module (HTL1-LDB7-NPL6-RSC3-RSC30) within the RSC complex.

It localises to the nucleus. In terms of biological role, component of the chromatin structure-remodeling complex (RSC), which is involved in transcription regulation and nucleosome positioning. RSC is responsible for the transfer of a histone octamer from a nucleosome core particle to naked DNA. The reaction requires ATP and involves an activated RSC-nucleosome intermediate. Remodeling reaction also involves DNA translocation, DNA twist and conformational change. As a reconfigurer of centromeric and flanking nucleosomes, RSC complex is required both for proper kinetochore function in chromosome segregation and, via a PKC1-dependent signaling pathway, for organization of the cellular cytoskeleton. This subunit is required for transcription of ribosomal protein genes and genes involved in the integrity of the cell wall. Together with HTL1, LDB7, NPL6, RSC3 components, defines a fungal-specific module within the RSC complex that plays a role in many cellular functions including the maintenance of cell wall integrity. The protein is Chromatin structure-remodeling complex protein RSC30 (RSC30) of Saccharomyces cerevisiae (strain ATCC 204508 / S288c) (Baker's yeast).